An 81-amino-acid polypeptide reads, in one-letter code: Cytotoxin 3a (81 aa).

Positions 1–21 (MKTLLLTLVVVTIVCLDLGYT) are cleaved as a signal peptide. 4 disulfide bridges follow: C24–C42, C35–C59, C63–C74, and C75–C80.

The protein belongs to the three-finger toxin family. Short-chain subfamily. Type IA cytotoxin sub-subfamily. Monomer in solution; Homodimer and oligomer in the presence of negatively charged lipids forming a pore with a size ranging between 20 and 30 Angstroms. In terms of tissue distribution, expressed by the venom gland.

Its subcellular location is the secreted. The protein resides in the target cell membrane. Shows cytolytic activity on many different cells by forming pore in lipid membranes. In vivo, increases heart rate or kills the animal by cardiac arrest. In addition, it binds to heparin with high affinity, interacts with Kv channel-interacting protein 1 (KCNIP1) in a calcium-independent manner, and binds to integrin alpha-V/beta-3 (ITGAV/ITGB3) with moderate affinity. The polypeptide is Cytotoxin 3a (Naja atra (Chinese cobra)).